Reading from the N-terminus, the 188-residue chain is Photosystem I assembly protein Ycf4 (188 aa).

Helical transmembrane passes span 26 to 46 (IWWG…GLSS) and 70 to 90 (LLFY…TIIL).

This sequence belongs to the Ycf4 family.

The protein resides in the cellular thylakoid membrane. Seems to be required for the assembly of the photosystem I complex. The polypeptide is Photosystem I assembly protein Ycf4 (Rippkaea orientalis (strain PCC 8801 / RF-1) (Cyanothece sp. (strain PCC 8801))).